The primary structure comprises 467 residues: UDP-N-acetylmuramate--L-alanine ligase (467 aa).

114-120 (GTHGKTT) is a binding site for ATP.

It belongs to the MurCDEF family.

Its subcellular location is the cytoplasm. It carries out the reaction UDP-N-acetyl-alpha-D-muramate + L-alanine + ATP = UDP-N-acetyl-alpha-D-muramoyl-L-alanine + ADP + phosphate + H(+). It functions in the pathway cell wall biogenesis; peptidoglycan biosynthesis. Cell wall formation. The sequence is that of UDP-N-acetylmuramate--L-alanine ligase from Bradyrhizobium sp. (strain ORS 278).